A 273-amino-acid polypeptide reads, in one-letter code: MPELPEVETLKNSLKDKLIGLIIENVELKRDNLRYKLSPLLATEILNTNILDVRRRAKYLIIDFNNDYSLIVHLGMNGRFTLQSANYKTQKHDHVIFDLSNGEKLIFNDTRRFGMIYSFKTDLLEKEFFNDLGIEPFSDLLTLEYLKDKLQTKKIPIKNLIMDNRVIVGVGNIYASESLHLARIHPDKSGNDLRDDEIENLIKAIRDVLTKAITAGGTTLKDFVNGDNKPGYFTKQLKVYGREGQSCLSCSSTIIKIKHSGRSTFYCKTCQYS.

P2 (schiff-base intermediate with DNA) is an active-site residue. E3 serves as the catalytic Proton donor. Residue K58 is the Proton donor; for beta-elimination activity of the active site. H92, R111, and K153 together coordinate DNA. The FPG-type zinc finger occupies 238–272 (KVYGREGQSCLSCSSTIIKIKHSGRSTFYCKTCQY). R262 serves as the catalytic Proton donor; for delta-elimination activity.

The protein belongs to the FPG family. As to quaternary structure, monomer. Requires Zn(2+) as cofactor.

It carries out the reaction Hydrolysis of DNA containing ring-opened 7-methylguanine residues, releasing 2,6-diamino-4-hydroxy-5-(N-methyl)formamidopyrimidine.. It catalyses the reaction 2'-deoxyribonucleotide-(2'-deoxyribose 5'-phosphate)-2'-deoxyribonucleotide-DNA = a 3'-end 2'-deoxyribonucleotide-(2,3-dehydro-2,3-deoxyribose 5'-phosphate)-DNA + a 5'-end 5'-phospho-2'-deoxyribonucleoside-DNA + H(+). Functionally, involved in base excision repair of DNA damaged by oxidation or by mutagenic agents. Acts as a DNA glycosylase that recognizes and removes damaged bases. Has a preference for oxidized purines, such as 7,8-dihydro-8-oxoguanine (8-oxoG). Has AP (apurinic/apyrimidinic) lyase activity and introduces nicks in the DNA strand. Cleaves the DNA backbone by beta-delta elimination to generate a single-strand break at the site of the removed base with both 3'- and 5'-phosphates. The protein is Formamidopyrimidine-DNA glycosylase of Rickettsia peacockii (strain Rustic).